We begin with the raw amino-acid sequence, 179 residues long: Crossover junction endodeoxyribonuclease RuvC (179 aa).

Residues Asp7, Glu67, and Asp139 contribute to the active site. Mg(2+) contacts are provided by Asp7, Glu67, and Asp139.

Belongs to the RuvC family. As to quaternary structure, homodimer which binds Holliday junction (HJ) DNA. The HJ becomes 2-fold symmetrical on binding to RuvC with unstacked arms; it has a different conformation from HJ DNA in complex with RuvA. In the full resolvosome a probable DNA-RuvA(4)-RuvB(12)-RuvC(2) complex forms which resolves the HJ. Mg(2+) serves as cofactor.

The protein resides in the cytoplasm. It catalyses the reaction Endonucleolytic cleavage at a junction such as a reciprocal single-stranded crossover between two homologous DNA duplexes (Holliday junction).. The RuvA-RuvB-RuvC complex processes Holliday junction (HJ) DNA during genetic recombination and DNA repair. Endonuclease that resolves HJ intermediates. Cleaves cruciform DNA by making single-stranded nicks across the HJ at symmetrical positions within the homologous arms, yielding a 5'-phosphate and a 3'-hydroxyl group; requires a central core of homology in the junction. The consensus cleavage sequence is 5'-(A/T)TT(C/G)-3'. Cleavage occurs on the 3'-side of the TT dinucleotide at the point of strand exchange. HJ branch migration catalyzed by RuvA-RuvB allows RuvC to scan DNA until it finds its consensus sequence, where it cleaves and resolves the cruciform DNA. This Sorangium cellulosum (strain So ce56) (Polyangium cellulosum (strain So ce56)) protein is Crossover junction endodeoxyribonuclease RuvC.